We begin with the raw amino-acid sequence, 396 residues long: L-cysteine desulfidase (396 aa).

Cys23 serves as the catalytic Proton acceptor. [4Fe-4S] cluster contacts are provided by Cys287, Cys329, and Cys336.

It belongs to the L-cysteine desulfidase family. Homotrimer. The cofactor is [4Fe-4S] cluster.

The enzyme catalyses L-cysteine + H2O = hydrogen sulfide + pyruvate + NH4(+) + H(+). In terms of biological role, catalyzes the cleavage of L-cysteine to form 2-aminoprop-2-enoate and sulfide. The former then spontaneously hydrolyzes to pyruvate and NH(3). May be responsible for the production of sulfide required for the biosynthesis of iron-sulfur centers in this archaea. This chain is L-cysteine desulfidase, found in Methanococcus maripaludis (strain DSM 14266 / JCM 13030 / NBRC 101832 / S2 / LL).